The primary structure comprises 559 residues: Dihydroxy-acid dehydratase (559 aa).

Residue Cys49 coordinates [2Fe-2S] cluster. Asp81 is a binding site for Mg(2+). [2Fe-2S] cluster is bound at residue Cys122. 2 residues coordinate Mg(2+): Asp123 and Lys124. Lys124 carries the N6-carboxylysine modification. Residue Cys194 coordinates [2Fe-2S] cluster. Position 446 (Glu446) interacts with Mg(2+). Ser472 functions as the Proton acceptor in the catalytic mechanism.

It belongs to the IlvD/Edd family. In terms of assembly, homodimer. [2Fe-2S] cluster is required as a cofactor. The cofactor is Mg(2+).

The catalysed reaction is (2R)-2,3-dihydroxy-3-methylbutanoate = 3-methyl-2-oxobutanoate + H2O. The enzyme catalyses (2R,3R)-2,3-dihydroxy-3-methylpentanoate = (S)-3-methyl-2-oxopentanoate + H2O. It participates in amino-acid biosynthesis; L-isoleucine biosynthesis; L-isoleucine from 2-oxobutanoate: step 3/4. Its pathway is amino-acid biosynthesis; L-valine biosynthesis; L-valine from pyruvate: step 3/4. Its function is as follows. Functions in the biosynthesis of branched-chain amino acids. Catalyzes the dehydration of (2R,3R)-2,3-dihydroxy-3-methylpentanoate (2,3-dihydroxy-3-methylvalerate) into 2-oxo-3-methylpentanoate (2-oxo-3-methylvalerate) and of (2R)-2,3-dihydroxy-3-methylbutanoate (2,3-dihydroxyisovalerate) into 2-oxo-3-methylbutanoate (2-oxoisovalerate), the penultimate precursor to L-isoleucine and L-valine, respectively. In Prochlorococcus marinus (strain MIT 9515), this protein is Dihydroxy-acid dehydratase.